The sequence spans 438 residues: uncharacterized protein (438 aa).

His59 contributes to the Zn(2+) binding site. The Proton acceptor role is filled by Glu62. 2 residues coordinate Zn(2+): His63 and Glu139.

Belongs to the peptidase M16 family. It depends on Zn(2+) as a cofactor.

This is an uncharacterized protein from Mycobacterium bovis (strain ATCC BAA-935 / AF2122/97).